The chain runs to 528 residues: DKGPAMKYRTDNTPEPISSHVSHYGSDSSQATQSPAIKGSAVNFNSHSMTPFGGPSGMTPFGGASSSFSAVPSPYPSTLTGGGTVFVALYDYEARTTDDLSFKGGERFQIINNTEGDWWEARSIATGKTGYIPSNYVAPADSIEAEEWYFGKMGRKDAERLLLNPGNQRGIFLVRESETTKGAYSLSIRDWDEVRGDNVKHYKIRKLDNGGYYITTRAQFESLQKLVKHSREHADGLCHKLTTVCPTVKPQTQGLAKDAWEIPRESLRLEVKLGQGCFGEVWMGTWNGTTKVAIKTLKLGTMMPEAFLQEAQIMKKLRHDKLVPLYAVVSEEPIYIVTEFMTKGSLLDFLKEGEGKFLKLPQLVDMAAQIADGMAYIERMNYIHRDLRAANILVGDNLVCKIADFGLARLIEDNEYTARQGAKFPIKWTAPEAALYGRFTIKSDVWSFGILLTELVTKGRVPYPGMVNREVLEQVERGYRMPCPQGCPESLHELMKLCWKKDPDERPTFEYIQSFLEDYFTAAEPSGY.

Basic and acidic residues predominate over residues 1–12; sequence DKGPAMKYRTDN. The tract at residues 1–35 is disordered; sequence DKGPAMKYRTDNTPEPISSHVSHYGSDSSQATQSP. The span at 18 to 29 shows a compositional bias: low complexity; the sequence is SSHVSHYGSDSS. Positions 81–142 constitute an SH3 domain; sequence GGGTVFVALY…PSNYVAPADS (62 aa). Residues 148 to 245 form the SH2 domain; that stretch reads WYFGKMGRKD…GLCHKLTTVC (98 aa). Residues 267 to 520 enclose the Protein kinase domain; that stretch reads LRLEVKLGQG…YIQSFLEDYF (254 aa). ATP-binding positions include 273-281 and Lys295; that span reads LGQGCFGEV. The active-site Proton acceptor is Asp386. At Tyr416 the chain carries Phosphotyrosine; by autocatalysis.

It belongs to the protein kinase superfamily. Tyr protein kinase family. SRC subfamily.

The catalysed reaction is L-tyrosyl-[protein] + ATP = O-phospho-L-tyrosyl-[protein] + ADP + H(+). In Galliformes (Y73SV), this protein is Tyrosine-protein kinase transforming protein Yes (V-YES).